We begin with the raw amino-acid sequence, 50 residues long: Sperm protamine P1 (50 aa).

This sequence belongs to the protamine P1 family. As to quaternary structure, cross-linked by interchain disulfide bonds around the DNA-helix. In terms of tissue distribution, testis.

It is found in the nucleus. It localises to the chromosome. Functionally, protamines substitute for histones in the chromatin of sperm during the haploid phase of spermatogenesis. They compact sperm DNA into a highly condensed, stable and inactive complex. The protein is Sperm protamine P1 (PRM1) of Pan paniscus (Pygmy chimpanzee).